Reading from the N-terminus, the 475-residue chain is NADP-dependent glyceraldehyde-3-phosphate dehydrogenase (475 aa).

Substrate is bound at residue Arg-103. Ser-151 contacts NADP(+). Residue 154–155 (NY) coordinates substrate. NADP(+)-binding positions include Lys-177, Thr-180, Asp-215, and 230–251 (GSTGIGERIGKMAGMRPIMLEL). Active-site residues include Glu-250 and Cys-284. 283–285 (RCT) lines the substrate pocket. Glu-377 contacts NADP(+). A substrate-binding site is contributed by Arg-437.

It belongs to the aldehyde dehydrogenase family. As to quaternary structure, homotetramer.

It carries out the reaction D-glyceraldehyde 3-phosphate + NADP(+) + H2O = (2R)-3-phosphoglycerate + NADPH + 2 H(+). The chain is NADP-dependent glyceraldehyde-3-phosphate dehydrogenase (gapN) from Streptococcus mutans serotype c (strain ATCC 700610 / UA159).